The primary structure comprises 1218 residues: NACHT, LRR and PYD domains-containing protein 1a allele 1 (1218 aa).

The interval 1-61 is disordered; that stretch reads MEESQSKQES…SLPGWSSTSN (61 aa). Polar residues predominate over residues 7–29; sequence KQESNTRVAQHGSQQDVDPTFQT. The region spanning 175-484 is the NACHT domain; it reads QLVIIEGAAG…EFFAAMSYIL (310 aa). 181–188 contributes to the ATP binding site; the sequence is GAAGIGKS. LRR repeat units follow at residues 343-364, 673-693, and 730-750; these read KERN…LTLC, NLEE…RSLC, and RLAE…RQLC. The segment covering 799–815 has biased composition (polar residues); it reads TMPTENTDGEESLTSSK. Positions 799–842 are disordered; it reads TMPTENTDGEESLTSSKQQQQQSGDKHMEPLGTDDDFWGPSGPV. Residues 835–968 are ZU5; the sequence is FWGPSGPVST…HFAVLENPSF (134 aa). In terms of domain architecture, FIIND spans 835–1118; that stretch reads FWGPSGPVST…LRPALPRMAS (284 aa). Positions 969–1118 are UPA; it reads SPMGVLLRMI…LRPALPRMAS (150 aa). The 90-residue stretch at 1122–1211 folds into the CARD domain; sequence DAPALLHFVD…HLIMDLLEKS (90 aa).

Belongs to the NLRP family. As to quaternary structure, interacts (via LRR repeats) with BCL2 and BCL2L1 (via the loop between motifs BH4 and BH3). Interacts with NOD2; this interaction is enhanced in the presence of muramyl dipeptide (MDP) and increases IL1B release. Interacts with EIF2AK2/PKR; this interaction requires EIF2AK2 activity, is accompanied by EIF2AK2 autophosphorylation and promotes inflammasome assembly in response to danger-associated signals. Interacts with MEFV; this interaction targets Nlrp1a to degradation by autophagy, hence preventing excessive IL1B- and IL18-mediated inflammation. Interacts with DPP9; leading to inhibit activation of the inflammasome. DPP9 acts via formation of a ternary complex, composed of a DPP9 homodimer, one full-length NLRP1 protein, and one cleaved C-terminus of Nlrp1a (NACHT, LRR and PYD domains-containing protein 1a, C-terminus). Interacts with DPP8; leading to inhibit activation of the inflammasome, probably via formation of a ternary complex with DPP8. In terms of assembly, interacts with the C-terminal part of Nlrp1a (NACHT, LRR and PYD domains-containing protein 1a, C-terminus) in absence of pathogens and other damage-associated signals. Interacts with the N-terminal part of Nlrp1a (NACHT, LRR and PYD domains-containing protein 1a, N-terminus) in absence of pathogens and other damage-associated signals. Homomultimer; forms the Nlrp1a inflammasome polymeric complex, a filament composed of homopolymers of this form in response to pathogens and other damage-associated signals. The Nlrp1a inflammasome polymeric complex directly recruits pro-caspase-1 (proCASP1) independently of PYCARD/ASC. Interacts (via CARD domain) with CASP1 (via CARD domain); leading to CASP1 activation. In terms of processing, autocatalytically cleaved. Autocatalytic cleavage in FIIND region occurs constitutively, prior to activation signals, and is required for inflammasome activity (IL1B release), possibly by facilitating CASP1 binding. Both N- and C-terminal parts remain associated non-covalently. (Microbial infection) Cleavage by B.anthracis lethal toxin (LT) endopeptidase promotes ubiquitination and degradation of the N-terminal part, releasing the cleaved C-terminal part of the protein (NACHT, LRR and PYD domains-containing protein 1a, C-terminus), which polymerizes and forms the Nlrp1a inflammasome. Post-translationally, ubiquitinated in response to pathogen-associated signals, leading to its degradation by the proteasome and subsequent release of the cleaved C-terminal part of the protein (NACHT, LRR and PYD domains-containing protein 1a, C-terminus), which polymerizes and forms the Nlrp1a inflammasome.

The protein localises to the cytoplasm. It is found in the cytosol. It localises to the nucleus. The protein resides in the inflammasome. Its activity is regulated as follows. Activated by cleavage by B.anthracis lethal toxin (LT) endopeptidase. Cleavage by LT promotes ubiquitination and degradation of the N-terminal part, releasing the cleaved C-terminal part of the protein (NACHT, LRR and PYD domains-containing protein 1a, C-terminus), which polymerizes and forms the Nlrp1a inflammasome. Nlrp1a inflammasome is inhibited by DPP8 and DPP9, which sequester the C-terminal fragment of Nlrp1a (NACHT, LRR and PYD domains-containing protein 1a, C-terminus) in a ternary complex, thereby preventing Nlrp1a oligomerization and activation. Nlrp1a inflammasome is weakly activated by Val-boroPro (Talabostat, PT-100), an inhibitor of dipeptidyl peptidases DPP8 and DPP9. Val-boroPro relieves inhibition of DPP8 and/or DPP9 by promoting disruption of the ternary complex, releasing its C-terminal part from autoinhibition. Weakly activated by Toxoplasma gondii. Its function is as follows. Acts as the sensor component of the Nlrp1a inflammasome, which mediates inflammasome activation in response to various pathogen-associated signals, leading to subsequent pyroptosis. Inflammasomes are supramolecular complexes that assemble in the cytosol in response to pathogens and other damage-associated signals and play critical roles in innate immunity and inflammation. Acts as a recognition receptor (PRR): recognizes specific pathogens and other damage-associated signals, such as B.anthracis lethal toxin (LT) or Val-boroPro inhibitor, and mediates the formation of the inflammasome polymeric complex. In response to pathogen-associated signals, the N-terminal part of Nlrp1a is degraded by the proteasome, releasing the cleaved C-terminal part of the protein (NACHT, LRR and PYD domains-containing protein 1a, C-terminus), which polymerizes to initiate the formation of the inflammasome complex: the inflammasome directly recruits pro-caspase-1 (proCASP1) independently of PYCARD/ASC and promotes caspase-1 (CASP1) activation, which subsequently cleaves and activates inflammatory cytokines IL1B and IL18 and gasdermin-D (GSDMD), leading to pyroptosis. In the absence of GSDMD expression, the Nlrp1a inflammasome is able to recruit and activate CASP8, leading to activation of gasdermin-E (GSDME). Functionally, constitutes the precursor of the Nlrp1a inflammasome, which mediates autoproteolytic processing within the FIIND domain to generate the N-terminal and C-terminal parts, which are associated non-covalently in absence of pathogens and other damage-associated signals. Regulatory part that prevents formation of the Nlrp1a inflammasome: in absence of pathogens and other damage-associated signals, interacts with the C-terminal part of Nlrp1a (NACHT, LRR and PYD domains-containing protein 1a, C-terminus), preventing activation of the Nlrp1a inflammasome. In response to pathogen-associated signals, this part is ubiquitinated by the N-end rule pathway and degraded by the proteasome, releasing the cleaved C-terminal part of the protein, which polymerizes and forms the Nlrp1a inflammasome. In terms of biological role, constitutes the active part of the Nlrp1a inflammasome. In absence of pathogens and other damage-associated signals, interacts with the N-terminal part of Nlrp1a (NACHT, LRR and PYD domains-containing protein 1a, N-terminus), preventing activation of the Nlrp1a inflammasome. In response to pathogen-associated signals, the N-terminal part of Nlrp1a is degraded by the proteasome, releasing this form, which polymerizes to form the Nlrp1a inflammasome complex: the Nlrp1a inflammasome complex then directly recruits pro-caspase-1 (proCASP1) and promotes caspase-1 (CASP1) activation, leading to gasdermin-D (GSDMD) cleavage and subsequent pyroptosis. The polypeptide is NACHT, LRR and PYD domains-containing protein 1a allele 1 (Rattus norvegicus (Rat)).